The sequence spans 3996 residues: Probable E3 ubiquitin-protein ligase HECTD4 (3996 aa).

The helical transmembrane segment at 282-302 (TCIIRCILVVFQVVFKFFFSP) threads the bilayer. Residues 1494 to 1510 (PTASEPDTTLTKTSPKN) are compositionally biased toward polar residues. Disordered regions lie at residues 1494 to 1524 (PTAS…ESEA) and 1616 to 1637 (PETV…SICR). Threonine 2080 carries the phosphothreonine modification. Disordered regions lie at residues 2219–2245 (FITS…DDIP), 2859–2919 (TSAT…PTVL), 3017–3053 (EDTK…STSS), and 3327–3403 (FDKS…QEVP). The segment covering 2232-2245 (ADDESDDDDDDDIP) has biased composition (acidic residues). Residues 2866 to 2887 (LSDSSSSSSSSPGQTPQSPSLL) show a composition bias toward low complexity. Positions 2888–2897 (SKRKKVKMKR) are enriched in basic residues. Composition is skewed to basic and acidic residues over residues 3017 to 3037 (EDTK…EPEK), 3327 to 3341 (FDKS…EQHP), and 3370 to 3403 (LSEK…QEVP). The HECT domain maps to 3627-3996 (SGGDPTYAFN…IHYREDPLSG (370 aa)). The Glycyl thioester intermediate role is filled by cysteine 3964.

Its subcellular location is the membrane. It catalyses the reaction S-ubiquitinyl-[E2 ubiquitin-conjugating enzyme]-L-cysteine + [acceptor protein]-L-lysine = [E2 ubiquitin-conjugating enzyme]-L-cysteine + N(6)-ubiquitinyl-[acceptor protein]-L-lysine.. The protein operates within protein modification; protein ubiquitination. Functionally, E3 ubiquitin-protein ligase which accepts ubiquitin from an E2 ubiquitin-conjugating enzyme in the form of a thioester and then directly transfers the ubiquitin to targeted substrates. This is Probable E3 ubiquitin-protein ligase HECTD4 (HECTD4) from Homo sapiens (Human).